Here is a 278-residue protein sequence, read N- to C-terminus: Pyrroline-5-carboxylate reductase (278 aa).

Belongs to the pyrroline-5-carboxylate reductase family.

It is found in the cytoplasm. The enzyme catalyses L-proline + NADP(+) = (S)-1-pyrroline-5-carboxylate + NADPH + 2 H(+). It catalyses the reaction L-proline + NAD(+) = (S)-1-pyrroline-5-carboxylate + NADH + 2 H(+). The protein operates within amino-acid biosynthesis; L-proline biosynthesis; L-proline from L-glutamate 5-semialdehyde: step 1/1. This Actinidia chinensis var. chinensis (Chinese soft-hair kiwi) protein is Pyrroline-5-carboxylate reductase.